A 486-amino-acid polypeptide reads, in one-letter code: ATP-dependent rRNA helicase rrp3 (486 aa).

The disordered stretch occupies residues 1–60 (MSSVKRRKTDKNPSLEGLKSKKTKESKKESHTPSPEPIEDTEDNRVIEETEEAEEDDAPK). The Q motif signature appears at 60–88 (KSFKDLGIVDSLCEACDTLGYKAPTPIQR). In terms of domain architecture, Helicase ATP-binding spans 91-262 (IPLALQGRDL…RASLKDPLRV (172 aa)). 104–111 (AETGSGKT) is an ATP binding site. Positions 210 to 213 (DEAD) match the DEAD box motif. Residues 286–434 (HKDTYLIYLL…EYPTVKDEVM (149 aa)) form the Helicase C-terminal domain. Basic and acidic residues-rich tracts occupy residues 447–460 (ARNE…DRGK) and 476–486 (RGRDEMDREEG). A disordered region spans residues 447 to 486 (ARNEMKNLHEDRGKKGAVLKGRRPANGAKRGRDEMDREEG).

This sequence belongs to the DEAD box helicase family. DDX47/RRP3 subfamily. In terms of assembly, interacts with the SSU processome.

The protein resides in the nucleus. The enzyme catalyses ATP + H2O = ADP + phosphate + H(+). In terms of biological role, ATP-dependent rRNA helicase required for pre-ribosomal RNA processing. Involved in the maturation of the 35S-pre-rRNA and to its cleavage to mature 18S rRNA. This chain is ATP-dependent rRNA helicase rrp3, found in Botryotinia fuckeliana (strain B05.10) (Noble rot fungus).